We begin with the raw amino-acid sequence, 268 residues long: Hydroxyethylthiazole kinase (268 aa).

Met45 serves as a coordination point for substrate. ATP-binding residues include Arg121 and Thr167. Gly194 is a binding site for substrate.

This sequence belongs to the Thz kinase family. Mg(2+) is required as a cofactor.

The enzyme catalyses 5-(2-hydroxyethyl)-4-methylthiazole + ATP = 4-methyl-5-(2-phosphooxyethyl)-thiazole + ADP + H(+). Its pathway is cofactor biosynthesis; thiamine diphosphate biosynthesis; 4-methyl-5-(2-phosphoethyl)-thiazole from 5-(2-hydroxyethyl)-4-methylthiazole: step 1/1. In terms of biological role, catalyzes the phosphorylation of the hydroxyl group of 4-methyl-5-beta-hydroxyethylthiazole (THZ). In Bacillus thuringiensis (strain Al Hakam), this protein is Hydroxyethylthiazole kinase.